The following is a 1029-amino-acid chain: Tyrosine-protein kinase-like otk (1029 aa).

Residues 1–18 (MISIYGLVMALMMASVLA) form the signal peptide. The Extracellular segment spans residues 19–577 (SSSRFQRVPQ…GGDGFLVTRA (559 aa)). Ig-like C2-type domains are found at residues 21–110 (SRFQ…AKLS), 109–195 (LSVI…RVMS), 247–361 (PEDL…APIS), 364–459 (PGIL…VAIN), and 464–554 (PKFS…VQLV). Residue Asn35 is glycosylated (N-linked (GlcNAc...) asparagine). 4 cysteine pairs are disulfide-bonded: Cys42–Cys91, Cys133–Cys184, Cys272–Cys350, and Cys395–Cys443. N-linked (GlcNAc...) asparagine glycans are attached at residues Asn332, Asn413, Asn425, Asn440, Asn453, Asn508, and Asn520. Residues Cys486 and Cys538 are joined by a disulfide bond. The chain crosses the membrane as a helical span at residues 578 to 598 (VLITMTVALAYIVLVVGLMLW). The Cytoplasmic segment spans residues 599 to 1029 (CRYRRQARKA…LSKAMQSAEK (431 aa)). Disordered stretches follow at residues 613–675 (LSTK…KKSA) and 714–756 (SPSD…KTSM). Positions 651 to 669 (KSSGDAQKSDDTACSQQSR) are enriched in polar residues. Ser674 is modified (phosphoserine). Residues 688-1024 (LSELIQIGRG…QLGAALSKAM (337 aa)) enclose the Protein kinase; inactive domain. The span at 716–727 (SDKDADTEKQHS) shows a compositional bias: basic and acidic residues.

This sequence belongs to the protein kinase superfamily. Tyr protein kinase family. Insulin receptor subfamily. Interacts with plexA; component of a receptor complex that mediates the repulsive signaling in response to Semaphorin ligands.

The protein localises to the cell membrane. Its function is as follows. Acts as a calcium-dependent, homophilic cell adhesion molecule that regulates neural recognition during the development of the nervous system. Component of the repulsive Plexin signaling response to regulate motor axon guidance at the embryonic stage. Also component of a receptor complex that is required in the adult visual system to innervate the lamina layer; specific targeting of R1-R6 axons. This Drosophila simulans (Fruit fly) protein is Tyrosine-protein kinase-like otk.